The following is a 419-amino-acid chain: Gamma-glutamyl phosphate reductase (419 aa).

Belongs to the gamma-glutamyl phosphate reductase family.

The protein resides in the cytoplasm. It catalyses the reaction L-glutamate 5-semialdehyde + phosphate + NADP(+) = L-glutamyl 5-phosphate + NADPH + H(+). The protein operates within amino-acid biosynthesis; L-proline biosynthesis; L-glutamate 5-semialdehyde from L-glutamate: step 2/2. Functionally, catalyzes the NADPH-dependent reduction of L-glutamate 5-phosphate into L-glutamate 5-semialdehyde and phosphate. The product spontaneously undergoes cyclization to form 1-pyrroline-5-carboxylate. The chain is Gamma-glutamyl phosphate reductase from Yersinia pestis.